The following is a 431-amino-acid chain: Glucose-1-phosphate adenylyltransferase (431 aa).

K39 provides a ligand contact to beta-D-fructose 1,6-bisphosphate. Residues R40, H46, and R52 each contribute to the AMP site. Residue Y114 coordinates alpha-D-glucose 1-phosphate. R130 contributes to the AMP binding site. Residues G179, 194-195 (EK), and S212 contribute to the alpha-D-glucose 1-phosphate site. E370 and R386 together coordinate AMP. Beta-D-fructose 1,6-bisphosphate contacts are provided by residues 419 to 423 (REMLR) and 429 to 431 (QER).

This sequence belongs to the bacterial/plant glucose-1-phosphate adenylyltransferase family. Homotetramer.

The enzyme catalyses alpha-D-glucose 1-phosphate + ATP + H(+) = ADP-alpha-D-glucose + diphosphate. The protein operates within glycan biosynthesis; glycogen biosynthesis. With respect to regulation, allosterically activated by fructose-1,6-bisphosphate (F16BP) and inhibited by AMP. In terms of biological role, involved in the biosynthesis of ADP-glucose, a building block required for the elongation reactions to produce glycogen. Catalyzes the reaction between ATP and alpha-D-glucose 1-phosphate (G1P) to produce pyrophosphate and ADP-Glc. The polypeptide is Glucose-1-phosphate adenylyltransferase (Salmonella dublin (strain CT_02021853)).